Consider the following 45-residue polypeptide: uncharacterized protein (45 aa).

This is an uncharacterized protein from Methanocaldococcus jannaschii (strain ATCC 43067 / DSM 2661 / JAL-1 / JCM 10045 / NBRC 100440) (Methanococcus jannaschii).